The sequence spans 584 residues: Complement component C8 alpha chain (584 aa).

The first 20 residues, 1–20 (MFAVVFFILSLMTCQPGVTA), serve as a signal peptide directing secretion. The propeptide occupies 21–30 (QEKVNQRVRR). Residues 38-91 (TCQLSNWSEWTDCFPCQDKKYRHRSLLQPNKFGGTICSGDIWDQASCSSSTTCV) form the TSP type-1 1 domain. 7 cysteine pairs are disulfide-bonded: Cys39–Cys74, Cys50–Cys84, Cys53–Cys90, Cys96–Cys108, Cys102–Cys121, Cys115–Cys130, and Cys140–Cys177. A glycan (C-linked (Man) tryptophan) is linked at Trp44. An LDL-receptor class A domain is found at 94–132 (AQCGQDFQCKETGRCLKRHLVCNGDQDCLDGSDEDDCED). Residues Leu113, Asn116, Asp118, Asp120, Asp126, and Glu127 each coordinate Ca(2+). Residues 135–498 (AIDEDCSQYE…QYLMEFNACR (364 aa)) enclose the MACPF domain. Beta stranded transmembrane passes span 248-256 (FGVTIGIGP), 259-266 (SPLLVGVG), 377-384 (GGSLGIQY), and 390-395 (VGGGLS). Cys375 and Cys399 form a disulfide bridge. Asn437 carries N-linked (GlcNAc...) asparagine glycosylation. 4 disulfides stabilise this stretch: Cys497-Cys544, Cys499-Cys515, Cys502-Cys517, and Cys519-Cys528. In terms of domain architecture, EGF-like spans 499–529 (CGPCFNNGVPILEGTSCRCQCRLGSLGAACE). Residues 539–583 (DGSWSCWSSWSVCRAGIQERRRECDNPAPQNGGASCPGRKVQTQA) form the TSP type-1 2 domain. 3 C-linked (Man) tryptophan glycosylation sites follow: Trp542, Trp545, and Trp548. Cystine bridges form between Cys551-Cys584 and Cys562-Cys574. Positions 562 to 584 (CDNPAPQNGGASCPGRKVQTQAC) are disordered.

The protein belongs to the complement C6/C7/C8/C9 family. Heterotrimer of 3 chains: alpha (C8A), beta (C8B) and gamma (C8G); the alpha and gamma chains are disulfide bonded. Component of the membrane attack complex (MAC), composed of complement C5b, C6, C7, C8A, C8B, C8G and multiple copies of the pore-forming subunit C9.

The protein resides in the secreted. It is found in the target cell membrane. Its activity is regulated as follows. Membrane attack complex (MAC) assembly is inhibited by CD59, thereby protecting self-cells from damage during complement activation. CD59 acts by binding to the beta-haipins of C8 (C8A and C8B), forming an intermolecular beta-sheet that prevents incorporation of the multiple copies of C9 required for complete formation of the osmolytic pore. MAC assembly is also inhibited by clusterin (CLU) chaperones that inhibit polymerization of C9. In terms of biological role, component of the membrane attack complex (MAC), a multiprotein complex activated by the complement cascade, which inserts into a target cell membrane and forms a pore, leading to target cell membrane rupture and cell lysis. The MAC is initiated by proteolytic cleavage of C5 into complement C5b in response to the classical, alternative, lectin and GZMK complement pathways. The complement pathways consist in a cascade of proteins that leads to phagocytosis and breakdown of pathogens and signaling that strengthens the adaptive immune system. C8A, together with C8B and C8G, inserts into the target membrane, but does not form pores by itself. During MAC assembly, associates with C5b, C6 and C7 to form the C5b8 intermediate complex that inserts into the target membrane and traverses the bilayer increasing membrane rigidity. The chain is Complement component C8 alpha chain from Homo sapiens (Human).